We begin with the raw amino-acid sequence, 368 residues long: MSILEKVQPIETMLPERYYTMSTEDMEKRVREIKEKMGETLFIPGHHYQKDEVVQFSDAAGDSLQLAQVAASNKKAKYIVFCGVHFMAETADMLTTDDQIVILPDMRAGCSMADMADIEQTERAWKELTKLFGDTMIPLTYVNSTAAIKAFCGRNGGATVTSSNAKQMVSWAFTQKERLVFLPDQHLGRNTTYDLGIPLDKMAVWDPYTDSLEYEGDIEEIQVILWKGHCSVHQNFTVKNIENVRKNQPDMNIIVHPECCYEVVAASDYAGSTKYIIDMIEAAPSGSKWAIGTEMNLVNRIIQQHPDKEIVSLNPFMCPCLTMNRIDLPHLLWALETIEKGEEINVISVDKQVTEEAVLALNRMLERV.

Histidine 46 and serine 63 together coordinate iminosuccinate. Cysteine 110 contacts [4Fe-4S] cluster. Iminosuccinate is bound by residues 141–143 (YVN) and serine 162. Cysteine 230 lines the [4Fe-4S] cluster pocket. Iminosuccinate-binding positions include 256 to 258 (HPE) and threonine 273. Residue cysteine 320 participates in [4Fe-4S] cluster binding.

The protein belongs to the quinolinate synthase family. Type 3 subfamily. [4Fe-4S] cluster serves as cofactor.

It localises to the cytoplasm. The catalysed reaction is iminosuccinate + dihydroxyacetone phosphate = quinolinate + phosphate + 2 H2O + H(+). It functions in the pathway cofactor biosynthesis; NAD(+) biosynthesis; quinolinate from iminoaspartate: step 1/1. Functionally, catalyzes the condensation of iminoaspartate with dihydroxyacetone phosphate to form quinolinate. This chain is Quinolinate synthase, found in Bacillus cereus (strain ATCC 10987 / NRS 248).